We begin with the raw amino-acid sequence, 296 residues long: Light-independent protochlorophyllide reductase iron-sulfur ATP-binding protein (296 aa).

Residues 10–15 (GIGKST) and Lys-39 contribute to the ATP site. Ser-14 contacts Mg(2+). [4Fe-4S] cluster-binding residues include Cys-95 and Cys-129. 180–181 (NR) lines the ATP pocket.

This sequence belongs to the NifH/BchL/ChlL family. Homodimer. Protochlorophyllide reductase is composed of three subunits; ChlL, ChlN and ChlB. [4Fe-4S] cluster serves as cofactor.

It is found in the plastid. Its subcellular location is the chloroplast. It catalyses the reaction chlorophyllide a + oxidized 2[4Fe-4S]-[ferredoxin] + 2 ADP + 2 phosphate = protochlorophyllide a + reduced 2[4Fe-4S]-[ferredoxin] + 2 ATP + 2 H2O. It participates in porphyrin-containing compound metabolism; chlorophyll biosynthesis (light-independent). Functionally, component of the dark-operative protochlorophyllide reductase (DPOR) that uses Mg-ATP and reduced ferredoxin to reduce ring D of protochlorophyllide (Pchlide) to form chlorophyllide a (Chlide). This reaction is light-independent. The L component serves as a unique electron donor to the NB-component of the complex, and binds Mg-ATP. The sequence is that of Light-independent protochlorophyllide reductase iron-sulfur ATP-binding protein from Mesostigma viride (Green alga).